Reading from the N-terminus, the 214-residue chain is 14-3-3 protein homolog 2 (214 aa).

Belongs to the 14-3-3 family.

The protein is 14-3-3 protein homolog 2 of Schistosoma mansoni (Blood fluke).